The primary structure comprises 635 residues: Threonine--tRNA ligase (635 aa).

Positions 1 to 58 constitute a TGS domain; sequence MIQVTCDQKNYEVLEGTTAAELAKQLKNSHQFIGVLINERPRDLSTHLNEGDTLVFLT. Positions 237–528 are catalytic; the sequence is DHRVLGAKLD…LIENFKGRFP (292 aa). Zn(2+) is bound by residues Cys328, His379, and His505.

Belongs to the class-II aminoacyl-tRNA synthetase family. In terms of assembly, homodimer. It depends on Zn(2+) as a cofactor.

The protein localises to the cytoplasm. The enzyme catalyses tRNA(Thr) + L-threonine + ATP = L-threonyl-tRNA(Thr) + AMP + diphosphate + H(+). Catalyzes the attachment of threonine to tRNA(Thr) in a two-step reaction: L-threonine is first activated by ATP to form Thr-AMP and then transferred to the acceptor end of tRNA(Thr). Also edits incorrectly charged L-seryl-tRNA(Thr). This chain is Threonine--tRNA ligase, found in Chlamydia pneumoniae (Chlamydophila pneumoniae).